Reading from the N-terminus, the 420-residue chain is MSFPRGSYDPAASNSSPWWPLSAEDANSSWEAAGHQKGSDPSGDVRNEELAKLEIAVLAVIFVVAVLGNSSVLLALHRTPRKTSRMHLFIRHLSLADLAVAFFQVLPQLCWDITYRFRGPDWLCRVVKHLQVFAMFASAYMLVVMTADRYIAVCHPLKTLQQPTRRSRLMIAASWVLSFLLSTPQYFIFSMIEIEVNNGTKTQDCWATFIQPWGTRAYVTWMTSGVFVVPVVILGTCYGFICYHIWRNVRGKTASRQSKGSGEDVAPFHKGLLVTPCVSSVKTISRAKIRTVKMTFVIVTAYILCWAPFFIVQMWSVWDDNFIWTDSENPSITITALLASLNSCCNPWIYMFFSGHLLQDCVQSFPCCQRMVQKFTKDDSDNMSRRHTSYSNNRSPTNSTGTWKDSPKSSRSIRFIPVST.

Residues 1-20 form a disordered region; it reads MSFPRGSYDPAASNSSPWWP. At 1–54 the chain is on the extracellular side; that stretch reads MSFPRGSYDPAASNSSPWWPLSAEDANSSWEAAGHQKGSDPSGDVRNEELAKLE. N-linked (GlcNAc...) asparagine glycosylation occurs at N27. Residues 55-75 traverse the membrane as a helical segment; that stretch reads IAVLAVIFVVAVLGNSSVLLA. At 76–92 the chain is on the cytoplasmic side; it reads LHRTPRKTSRMHLFIRH. Residues 93–113 traverse the membrane as a helical segment; sequence LSLADLAVAFFQVLPQLCWDI. The Extracellular portion of the chain corresponds to 114-125; sequence TYRFRGPDWLCR. A disulfide bond links C124 and C205. The chain crosses the membrane as a helical span at residues 126-146; it reads VVKHLQVFAMFASAYMLVVMT. The Cytoplasmic segment spans residues 147–168; sequence ADRYIAVCHPLKTLQQPTRRSR. A helical membrane pass occupies residues 169–189; sequence LMIAASWVLSFLLSTPQYFIF. Topologically, residues 190 to 225 are extracellular; the sequence is SMIEIEVNNGTKTQDCWATFIQPWGTRAYVTWMTSG. An N-linked (GlcNAc...) asparagine glycan is attached at N198. The helical transmembrane segment at 226-246 threads the bilayer; that stretch reads VFVVPVVILGTCYGFICYHIW. Over 247–294 the chain is Cytoplasmic; that stretch reads RNVRGKTASRQSKGSGEDVAPFHKGLLVTPCVSSVKTISRAKIRTVKM. Residues 295 to 315 form a helical membrane-spanning segment; that stretch reads TFVIVTAYILCWAPFFIVQMW. Over 316–331 the chain is Extracellular; the sequence is SVWDDNFIWTDSENPS. A helical membrane pass occupies residues 332-352; it reads ITITALLASLNSCCNPWIYMF. The Cytoplasmic portion of the chain corresponds to 353 to 420; sequence FSGHLLQDCV…RSIRFIPVST (68 aa). 2 S-palmitoyl cysteine lipidation sites follow: C367 and C368. A disordered region spans residues 379–411; the sequence is DSDNMSRRHTSYSNNRSPTNSTGTWKDSPKSSR. The segment covering 389-403 has biased composition (polar residues); the sequence is SYSNNRSPTNSTGTW. Residue S406 is modified to Phosphoserine.

The protein belongs to the G-protein coupled receptor 1 family. Vasopressin/oxytocin receptor subfamily.

The protein localises to the cell membrane. Receptor for arginine vasopressin. The activity of this receptor is mediated by G proteins which activate a phosphatidyl-inositol-calcium second messenger system. Involved in social memory formation. This is Vasopressin V1a receptor (Avpr1a) from Microtus ochrogaster (Prairie vole).